We begin with the raw amino-acid sequence, 89 residues long: Large ribosomal subunit protein bL27 (89 aa).

The segment at 1 to 20 (MAHKKAGGSSRNGRDSAGQR) is disordered.

This sequence belongs to the bacterial ribosomal protein bL27 family.

This is Large ribosomal subunit protein bL27 from Paramagnetospirillum magneticum (strain ATCC 700264 / AMB-1) (Magnetospirillum magneticum).